Consider the following 98-residue polypeptide: NADH-ubiquinone oxidoreductase chain 4L (98 aa).

3 helical membrane passes run 1–21 (MIPT…GMLT), 29–49 (SLLC…LIAL), and 61–81 (IILL…LVSI).

It belongs to the complex I subunit 4L family. Core subunit of respiratory chain NADH dehydrogenase (Complex I) which is composed of 45 different subunits.

Its subcellular location is the mitochondrion inner membrane. It catalyses the reaction a ubiquinone + NADH + 5 H(+)(in) = a ubiquinol + NAD(+) + 4 H(+)(out). Its function is as follows. Core subunit of the mitochondrial membrane respiratory chain NADH dehydrogenase (Complex I) which catalyzes electron transfer from NADH through the respiratory chain, using ubiquinone as an electron acceptor. Part of the enzyme membrane arm which is embedded in the lipid bilayer and involved in proton translocation. The protein is NADH-ubiquinone oxidoreductase chain 4L (MT-ND4L) of Macaca ochreata subsp. brunnescens (Muna-buton macaque).